The chain runs to 452 residues: tRNA modification GTPase MnmE (452 aa).

Residues arginine 21, glutamate 78, and lysine 118 each contribute to the (6S)-5-formyl-5,6,7,8-tetrahydrofolate site. The region spanning 214-375 (GMKVVIAGRP…LREHLKQSMG (162 aa)) is the TrmE-type G domain. Asparagine 224 serves as a coordination point for K(+). GTP contacts are provided by residues 224 to 229 (NAGKSS), 243 to 249 (TDIAGTT), and 268 to 271 (DTAG). Serine 228 lines the Mg(2+) pocket. Residues threonine 243, isoleucine 245, and threonine 248 each coordinate K(+). A Mg(2+)-binding site is contributed by threonine 249. Lysine 452 provides a ligand contact to (6S)-5-formyl-5,6,7,8-tetrahydrofolate.

Belongs to the TRAFAC class TrmE-Era-EngA-EngB-Septin-like GTPase superfamily. TrmE GTPase family. As to quaternary structure, homodimer. Heterotetramer of two MnmE and two MnmG subunits. Requires K(+) as cofactor.

The protein localises to the cytoplasm. Functionally, exhibits a very high intrinsic GTPase hydrolysis rate. Involved in the addition of a carboxymethylaminomethyl (cmnm) group at the wobble position (U34) of certain tRNAs, forming tRNA-cmnm(5)s(2)U34. The polypeptide is tRNA modification GTPase MnmE (Actinobacillus succinogenes (strain ATCC 55618 / DSM 22257 / CCUG 43843 / 130Z)).